We begin with the raw amino-acid sequence, 246 residues long: Large ribosomal subunit protein uL3 (246 aa).

Disordered stretches follow at residues S140–M162 and A214–A246. Q151 carries the N5-methylglutamine modification. Positions E234–A246 are enriched in low complexity.

It belongs to the universal ribosomal protein uL3 family. As to quaternary structure, part of the 50S ribosomal subunit. Forms a cluster with proteins L14 and L19. In terms of processing, methylated by PrmB.

Functionally, one of the primary rRNA binding proteins, it binds directly near the 3'-end of the 23S rRNA, where it nucleates assembly of the 50S subunit. In Methylorubrum extorquens (strain CM4 / NCIMB 13688) (Methylobacterium extorquens), this protein is Large ribosomal subunit protein uL3.